A 168-amino-acid polypeptide reads, in one-letter code: MTERAVLAGGCFWGMQDLIRKLPGIESTRVGYTGGEVPNATYRNHGNHAEGIEILFDPEKTSYRQLLEFFFQIHDPTTPNRQGNDRGPSYRSAIYYVDEEQKQIALDTIADVNASGLWPGKVVTEVEPVSDFWEAEPEHQDYLEKVPNGYTCHFPRPNWVLPKRAATE.

Cys-11 is an active-site residue.

The protein belongs to the MsrA Met sulfoxide reductase family.

The enzyme catalyses L-methionyl-[protein] + [thioredoxin]-disulfide + H2O = L-methionyl-(S)-S-oxide-[protein] + [thioredoxin]-dithiol. It carries out the reaction [thioredoxin]-disulfide + L-methionine + H2O = L-methionine (S)-S-oxide + [thioredoxin]-dithiol. Has an important function as a repair enzyme for proteins that have been inactivated by oxidation. Catalyzes the reversible oxidation-reduction of methionine sulfoxide in proteins to methionine. This Rhodopirellula baltica (strain DSM 10527 / NCIMB 13988 / SH1) protein is Peptide methionine sulfoxide reductase MsrA 2.